The sequence spans 427 residues: Tol-Pal system protein TolB (427 aa).

The first 23 residues, 1 to 23 (MKLLKRLVSVFAIVLAVGSNAFA), serve as a signal peptide directing secretion.

It belongs to the TolB family. The Tol-Pal system is composed of five core proteins: the inner membrane proteins TolA, TolQ and TolR, the periplasmic protein TolB and the outer membrane protein Pal. They form a network linking the inner and outer membranes and the peptidoglycan layer.

It localises to the periplasm. Part of the Tol-Pal system, which plays a role in outer membrane invagination during cell division and is important for maintaining outer membrane integrity. This Haemophilus influenzae (strain ATCC 51907 / DSM 11121 / KW20 / Rd) protein is Tol-Pal system protein TolB.